We begin with the raw amino-acid sequence, 220 residues long: Chalcone--flavanone isomerase B (220 aa).

Substrate-binding residues include threonine 50, asparagine 115, and threonine 192.

Belongs to the chalcone isomerase family.

The enzyme catalyses a chalcone = a flavanone.. It functions in the pathway secondary metabolite biosynthesis; flavonoid biosynthesis. Functionally, catalyzes the intramolecular cyclization of bicyclic chalcones into tricyclic (S)-flavanones. Responsible for the isomerization of 4,2',4',6'-tetrahydroxychalcone (also termed chalcone) into naringenin. This Petunia hybrida (Petunia) protein is Chalcone--flavanone isomerase B (CHI2).